We begin with the raw amino-acid sequence, 115 residues long: Large ribosomal subunit protein bL20 (115 aa).

The protein belongs to the bacterial ribosomal protein bL20 family.

Binds directly to 23S ribosomal RNA and is necessary for the in vitro assembly process of the 50S ribosomal subunit. It is not involved in the protein synthesizing functions of that subunit. The sequence is that of Large ribosomal subunit protein bL20 from Chlorobaculum parvum (strain DSM 263 / NCIMB 8327) (Chlorobium vibrioforme subsp. thiosulfatophilum).